The following is a 115-amino-acid chain: Large ribosomal subunit protein bL19 (115 aa).

This sequence belongs to the bacterial ribosomal protein bL19 family.

This protein is located at the 30S-50S ribosomal subunit interface and may play a role in the structure and function of the aminoacyl-tRNA binding site. The protein is Large ribosomal subunit protein bL19 of Nitratidesulfovibrio vulgaris (strain ATCC 29579 / DSM 644 / CCUG 34227 / NCIMB 8303 / VKM B-1760 / Hildenborough) (Desulfovibrio vulgaris).